Consider the following 158-residue polypeptide: Crossover junction endodeoxyribonuclease RuvC (158 aa).

Active-site residues include D7, E66, and D139. Mg(2+) contacts are provided by D7, E66, and D139.

The protein belongs to the RuvC family. As to quaternary structure, homodimer which binds Holliday junction (HJ) DNA. The HJ becomes 2-fold symmetrical on binding to RuvC with unstacked arms; it has a different conformation from HJ DNA in complex with RuvA. In the full resolvosome a probable DNA-RuvA(4)-RuvB(12)-RuvC(2) complex forms which resolves the HJ. Mg(2+) is required as a cofactor.

The protein resides in the cytoplasm. The enzyme catalyses Endonucleolytic cleavage at a junction such as a reciprocal single-stranded crossover between two homologous DNA duplexes (Holliday junction).. In terms of biological role, the RuvA-RuvB-RuvC complex processes Holliday junction (HJ) DNA during genetic recombination and DNA repair. Endonuclease that resolves HJ intermediates. Cleaves cruciform DNA by making single-stranded nicks across the HJ at symmetrical positions within the homologous arms, yielding a 5'-phosphate and a 3'-hydroxyl group; requires a central core of homology in the junction. The consensus cleavage sequence is 5'-(A/T)TT(C/G)-3'. Cleavage occurs on the 3'-side of the TT dinucleotide at the point of strand exchange. HJ branch migration catalyzed by RuvA-RuvB allows RuvC to scan DNA until it finds its consensus sequence, where it cleaves and resolves the cruciform DNA. This Nitratiruptor sp. (strain SB155-2) protein is Crossover junction endodeoxyribonuclease RuvC.